The primary structure comprises 721 residues: MGRLLLLAGLVLLMKHSDGTAYKLVCYFTNWAHSRPGPASIMPHDLDPFLCTHLIFAFASMSNNQIVAKNLQDENVLYPEFNKLKERNRELKTLLSIGGWNFGTSRFTAMLSTLANREKFIDSVISFLRIHGFDGLDLFFLYPGLRGSPPHDRWNFLFLIEELQFAFEREALLTQHPRLLLSAAVSGIPSIIHTSYDALLLGRRLDFINVLSYDLHGSWEKFTGHNSPLFSLPEDSKSSAYAMNYWRKLGTPADKLIMGFPTYGRNFYLLKESKNGLQTASMGPASPGKYTKQAGFLAYYEVCSFVQRAKKHWIDYQYVPYAFKGKEWLGYDDTISFSYKAMYVKREHFGGAMVWTLDMDDVRGTFCGNGPFPLVHILNELLVQTESNSTPLPQFWFTSSVNASGPGSENTALTEVLTTDTIKILPPGGEAMTTEVHRRYENMTTVPSDGSVTPGGTASPRKHAVTPENNTMAAEAKTMSTLDFFSKTTTGVSKTTTGISKTTTGVSKTTTGVSKATAGISKTIPEISKATAGVSKTTTGVSKTTTGISKTITGVSKTTTGISKTTTGISKTTTGVSKITTGVSKTTTGISKTTTGISQTTTGISKTTTDISKTTTGISKTTPGISKTTPGMTVIVQTQANEAETTATMDHQSVTPTEMDTTLFYLKTMTPSEKETSRKKTMVLEKATVSPREMSATPNGQSKTLKWASLITEVETYSQDG.

The first 21 residues, 1 to 21, serve as a signal peptide directing secretion; that stretch reads MGRLLLLAGLVLLMKHSDGTA. The GH18 domain maps to 22-385; the sequence is YKLVCYFTNW…HILNELLVQT (364 aa). Cys-26 and Cys-51 are joined by a disulfide. Chitin-binding positions include 71–72, 98–101, Tyr-142, 211–214, and Trp-355; these read LQ, GGWN, and LSYD. Asn-402 and Asn-442 each carry an N-linked (GlcNAc...) asparagine glycan. The span at 444-456 shows a compositional bias: polar residues; it reads TTVPSDGSVTPGG. The tract at residues 444–465 is disordered; the sequence is TTVPSDGSVTPGGTASPRKHAV. N-linked (GlcNAc...) asparagine glycosylation is present at Asn-469. 21 consecutive repeat copies span residues 486–492, 493–499, 500–506, 507–513, 514–520, 521–527, 528–534, 535–541, 542–548, 549–555, 556–562, 563–569, 570–576, 577–583, 584–590, 591–597, 598–604, 605–611, 612–618, 619–625, and 626–632. Positions 486–632 are 21 X 7 AA tandem repeats of S-K-[TAI]-[TI]-[TAP]-[GED]-[IVM]; the sequence is SKTTTGVSKT…PGISKTTPGM (147 aa).

This sequence belongs to the glycosyl hydrolase 18 family. As to expression, epithelial cells of the oviduct.

The protein localises to the cytoplasmic vesicle. It localises to the secretory vesicle. Functionally, binds to oocyte zona pellucida in vivo. May play a role in the fertilization process and/or early embryonic development. The protein is Oviduct-specific glycoprotein (Ovgp1) of Mus musculus (Mouse).